A 399-amino-acid chain; its full sequence is S-adenosylmethionine synthase (399 aa).

ATP is bound at residue His16. Residue Asp18 coordinates Mg(2+). Residue Glu44 coordinates K(+). 2 residues coordinate L-methionine: Glu57 and Gln100. The segment at 100–110 (QSSDIAQGVNE) is flexible loop. ATP contacts are provided by residues 177–179 (DAK), 244–245 (RF), Asp253, 259–260 (RK), Ala276, and Lys280. Residue Asp253 coordinates L-methionine. Lys284 contacts L-methionine.

The protein belongs to the AdoMet synthase family. As to quaternary structure, homotetramer; dimer of dimers. Mg(2+) is required as a cofactor. K(+) serves as cofactor.

It localises to the cytoplasm. It catalyses the reaction L-methionine + ATP + H2O = S-adenosyl-L-methionine + phosphate + diphosphate. It participates in amino-acid biosynthesis; S-adenosyl-L-methionine biosynthesis; S-adenosyl-L-methionine from L-methionine: step 1/1. Its function is as follows. Catalyzes the formation of S-adenosylmethionine (AdoMet) from methionine and ATP. The overall synthetic reaction is composed of two sequential steps, AdoMet formation and the subsequent tripolyphosphate hydrolysis which occurs prior to release of AdoMet from the enzyme. The chain is S-adenosylmethionine synthase from Lactococcus lactis subsp. lactis (strain IL1403) (Streptococcus lactis).